The primary structure comprises 201 residues: Small ribosomal subunit protein uS4c (201 aa).

The tract at residues 15-44 is disordered; the sequence is LGALPGLTNKRPRAGSDLRNQSRSGKKSQY. An S4 RNA-binding domain is found at 89 to 149; the sequence is MRLDNILFRL…DEQNSRALIQ (61 aa).

It belongs to the universal ribosomal protein uS4 family. Part of the 30S ribosomal subunit. Contacts protein S5. The interaction surface between S4 and S5 is involved in control of translational fidelity.

Its subcellular location is the plastid. The protein resides in the chloroplast. Its function is as follows. One of the primary rRNA binding proteins, it binds directly to 16S rRNA where it nucleates assembly of the body of the 30S subunit. Functionally, with S5 and S12 plays an important role in translational accuracy. This Daucus carota (Wild carrot) protein is Small ribosomal subunit protein uS4c (rps4).